Here is a 287-residue protein sequence, read N- to C-terminus: ADP-dependent (S)-NAD(P)H-hydrate dehydratase (287 aa).

The region spanning 7 to 283 (TTALVKKFIP…PEISTVMKPF (277 aa)) is the YjeF C-terminal domain. Ala-42 and His-159 together coordinate (6S)-NADPHX. Residues 196 to 200 (KGSTD) and Gly-224 contribute to the AMP site. (6S)-NADPHX is bound at residue Asp-225.

This sequence belongs to the NnrD/CARKD family. Homotetramer. Mg(2+) serves as cofactor.

It carries out the reaction (6S)-NADHX + ADP = AMP + phosphate + NADH + H(+). It catalyses the reaction (6S)-NADPHX + ADP = AMP + phosphate + NADPH + H(+). In terms of biological role, catalyzes the dehydration of the S-form of NAD(P)HX at the expense of ADP, which is converted to AMP. Together with NAD(P)HX epimerase, which catalyzes the epimerization of the S- and R-forms, the enzyme allows the repair of both epimers of NAD(P)HX, a damaged form of NAD(P)H that is a result of enzymatic or heat-dependent hydration. The chain is ADP-dependent (S)-NAD(P)H-hydrate dehydratase from Nitrosopumilus maritimus (strain SCM1).